Reading from the N-terminus, the 758-residue chain is Ferrichrome receptor FcuA (758 aa).

A signal peptide spans 1–36; that stretch reads MNQTISSRAPQKRLAPRLLCVMIGAALGTLSASSWA. Positions 66-73 match the TonB box motif; it reads DTITVVGA. A TBDR plug domain is found at 106–216; it reads DARNVPFNVI…VGGMINLEPK (111 aa). The TBDR beta-barrel domain maps to 221-758; it reads TPLTRVTVDY…ALKLSVSMDF (538 aa). A TonB C-terminal box motif is present at residues 741 to 758; that stretch reads YIYQGDPRALKLSVSMDF.

Belongs to the TonB-dependent receptor family.

It is found in the cell outer membrane. Receptor for the hydroxamate siderophore, ferrichrome. Binds also to most other ferrichrome derivatives except enantio ferrichrome and ferric rhodotorulate. The sequence is that of Ferrichrome receptor FcuA (fcuA) from Yersinia enterocolitica.